The chain runs to 1257 residues: Stromal processing peptidase, chloroplastic (1257 aa).

A chloroplast-targeting transit peptide spans 1–142; it reads MAASTSTSSL…ASVKRVQLPH (142 aa). Histidine 236 provides a ligand contact to Zn(2+). The active-site Proton acceptor is the glutamate 239. Residue histidine 240 coordinates Zn(2+). Residue glutamate 309 is part of the active site. Glutamate 316 lines the Zn(2+) pocket. The interval 1233-1257 is disordered; it reads EEAGEGYPGVLPMGRGLSTMTRPTT.

This sequence belongs to the peptidase M16 family. Zn(2+) is required as a cofactor.

The protein resides in the plastid. It is found in the chloroplast stroma. Its function is as follows. Cleaves presequences (transit peptides) from chloroplastic protein precursors. Initially recognizes a precursor by binding to the C-terminus of its transit peptide and then removes the transit peptide in a single endoproteolytic step. In a next step, pursues the cleavage of transit peptide to a subfragment form. This Pisum sativum (Garden pea) protein is Stromal processing peptidase, chloroplastic.